The following is a 344-amino-acid chain: Methionine import ATP-binding protein MetN (344 aa).

Residues 2 to 241 (IEINRVNKIF…PKTALAQEFI (240 aa)) enclose the ABC transporter domain. 38 to 45 (GSSGAGKS) contributes to the ATP binding site.

The protein belongs to the ABC transporter superfamily. Methionine importer (TC 3.A.1.24) family. The complex is composed of two ATP-binding proteins (MetN), two transmembrane proteins (MetI) and a solute-binding protein (MetQ).

Its subcellular location is the cell inner membrane. The catalysed reaction is L-methionine(out) + ATP + H2O = L-methionine(in) + ADP + phosphate + H(+). It carries out the reaction D-methionine(out) + ATP + H2O = D-methionine(in) + ADP + phosphate + H(+). In terms of biological role, part of the ABC transporter complex MetNIQ involved in methionine import. Responsible for energy coupling to the transport system. This chain is Methionine import ATP-binding protein MetN, found in Aliivibrio fischeri (strain ATCC 700601 / ES114) (Vibrio fischeri).